The primary structure comprises 288 residues: Prohibitin-1, mitochondrial (288 aa).

The Mitochondrial matrix portion of the chain corresponds to 1-10; that stretch reads MNNVKVPKIP. A helical; Signal-anchor for type II membrane protein transmembrane segment spans residues 11 to 30; sequence GGGAISTLLKVGIIGGLGLY. At 31–288 the chain is on the mitochondrial intermembrane side; that stretch reads GATHSLYNVE…GMNLDVDAKN (258 aa). The stretch at 186-219 forms a coiled coil; the sequence is KEFTAAIEAKQVAAQEAERAKFIVEKAEQDKRSA.

Belongs to the prohibitin family. Component of a prohibitin multimeric complex in mitochondrial membranes. Mostly expressed in proliferative tissues, including vasculature, shoot and root apical tissues.

The protein resides in the mitochondrion inner membrane. Prohibitin probably acts as a holdase/unfoldase for the stabilization of newly synthesized mitochondrial proteins. This is Prohibitin-1, mitochondrial (PHB1) from Arabidopsis thaliana (Mouse-ear cress).